The following is a 264-amino-acid chain: Phosphoinositide-3-kinase-interacting protein 1 (264 aa).

The first 21 residues, M1–G21, serve as a signal peptide directing secretion. Residues S22–L170 are Extracellular-facing. Residues G24–C101 enclose the Kringle domain. Disulfide bonds link C25-C101, C46-C82, and C70-C96. The interval R94–A129 is disordered. Residues L117–A129 are compositionally biased toward basic and acidic residues. A helical membrane pass occupies residues G171–V191. The Cytoplasmic segment spans residues G192–A264.

The protein localises to the cell membrane. Functionally, negative regulator of hepatic phosphatidylinositol 3-kinase (PI3K) activity. This chain is Phosphoinositide-3-kinase-interacting protein 1 (Pik3ip1), found in Mus musculus (Mouse).